We begin with the raw amino-acid sequence, 612 residues long: MKMDKKTIVWFRRDLRIEDNPALAAAAHEGSVFPVFIWCPEEEGQFYPGRASRWWMKQSLAHLSQSLKALGSDLTLIKTHNTISAILDCIRVTGATKVVFNHLYDPVSLVRDHTVKEKLVERGISVQSYNGDLLYEPWEIYCEKGKPFTSFNSYWKKCLDMSIESVMLPPPWRLMPITAAAEAIWACSIEELGLENEAEKPSNALLTRAWSPGWSNADKLLNEFIEKQLIDYAKNSKKVVGNSTSLLSPYLHFGEISVRHVFQCARMKQIIWARDKNSEGEESADLFLRGIGLREYSRYICFNFPFTHEQSLLSHLRFFPWDADVDKFKAWRQGRTGYPLVDAGMRELWATGWMHNRIRVIVSSFAVKFLLLPWKWGMKYFWDTLLDADLECDILGWQYISGSIPDGHELDRLDNPALQGAKYDPEGEYIRQWLPELARLPTEWIHHPWDAPLTVLKASGVELGTNYAKPIVDIDTARELLAKAISRTREAQIMIGAAPDEIVADSFEALGANTIKEPGLCPSVSSNDQQVPSAVRYNGSKRVKPEEEEERDMKKSRGFDERELFSTAESSSSSSVFFVSQSCSLASEGKNLEGIQDSSDQITTSLGKNGCK.

The tract at residues 1 to 485 (MKMDKKTIVW…TARELLAKAI (485 aa)) is CNT2, binds chromophores to sense blue light and mediate CRY dimerization. Positions 5 to 134 (KKTIVWFRRD…SVQSYNGDLL (130 aa)) constitute a Photolyase/cryptochrome alpha/beta domain. Tyr232 is a binding site for FAD. 2 residues coordinate Mg(2+): Asn235 and Ser243. 244-248 (TSLLS) is an FAD binding site. Position 355 (His355) interacts with Mg(2+). Residues Asn356 and 387–389 (DAD) each bind FAD. 356–357 (NR) is an ATP binding site. Asp406 contacts ATP. Positions 486 to 612 (SRTREAQIMI…TTSLGKNGCK (127 aa)) are CCT2/CCE2, mediates blue light signaling. Residues 539 to 576 (GSKRVKPEEEEERDMKKSRGFDERELFSTAESSSSSSV) are disordered. A Nuclear localization signal motif is present at residues 541 to 555 (KRVKPEEEEERDMKK). Over residues 551 to 564 (RDMKKSRGFDEREL) the composition is skewed to basic and acidic residues. Residue Ser587 is modified to Phosphoserine; by CK1. The disordered stretch occupies residues 590-612 (KNLEGIQDSSDQITTSLGKNGCK). Positions 596-612 (QDSSDQITTSLGKNGCK) are enriched in polar residues. Phosphoserine is present on residues Ser598 and Ser599. Position 603 is a phosphothreonine; by CK1 (Thr603). Ser605 is modified (phosphoserine).

The protein belongs to the DNA photolyase class-1 family. Homodimer. Blue-light dependent dimerization. Interacts with COP1 and PHYB in the nucleus. Binds reversibly to CIBs proteins such as BHLH63/CIB1, BHLH78/CIB2, BHLH74/CIB4 and BHLH76/CIB5 after blue light illumination to stimulate their transcription factor activities. Interacts with PIF4 and PIF5 in the nucleus in response to low blue light (LBL). Binds to SPA1 in response to blue light, this interaction prevents SPA1/COP1 complex formation but stimulates interaction with COP1, and thus avoid COP1-dependent degradation of the transcription factors CO and HY5 by the proteasome and promotes hypocotyl elongation and floral initiation. Binding to ATP mediates conformational changes which facilitate flavin binding. Interacts with BIC1 in both darkness and light. Interacts with NRP. FAD is required as a cofactor. Requires (6R)-5,10-methylene-5,6,7,8-tetrahydrofolate as cofactor. In terms of processing, phosphorylated by CK1.3 and CK1.4; in response to blue light. Required for degradation. Adopts an open conformation when phosphorylated upon photoexcitation and thus interacts with signaling partner proteins. Not autophosphorylated, even in complex with FAD cofactor. Ubiquitinated; in response to blue light. In terms of tissue distribution, mostly expressed in the shoot meristems and root tips, and, to a lower extent, in the cotyledons, hypocotyls, and roots.

It is found in the nucleus. It localises to the PML body. The protein localises to the cytoplasm. Photoreceptor that mediates primarily blue light inhibition of hypocotyl elongation and photoperiodic control of floral initiation, and regulates other light responses, including circadian rhythms, tropic growth, stomata opening, guard cell development, root development, bacterial and viral pathogen responses, abiotic stress responses, cell cycles, programmed cell death, apical dominance, fruit and ovule development, seed dormancy, and magnetoreception. Photoexcited cryptochromes interact with signaling partner proteins to alter gene expression at both transcriptional and post-translational levels and, consequently, regulate the corresponding metabolic and developmental programs. Blue-light absorbing flavoprotein that activates reversible flavin photoreduction via an electron transport chain comprising a tryptophan triad (W-321, W-374 and W-397), or via an alternative electron transport that involves small metabolites, including NADPH, NADH, and ATP. The half-life of the activated signaling state is about 16 minutes. Perceives low blue light (LBL) and responds by directly contacting two bHLH transcription factors, PIF4 and PIF5, at chromatin on E-box variant 5'-CA[CT]GTG-3' to promote their activity and stimulate specific gene expression to adapt global physiology (e.g. hypocotyl elongation and hyponastic growth in low blue light). In response to blue light, binds to CIB proteins (e.g. BHLH63/CIB1 and BHLH76/CIB5) to activate transcription and floral initiation. Mediates blue light-induced gene expression, floral initiation and hypocotyl elongation through the interaction with SPA1 that prevents formation of SPA1/COP1 complex but stimulates COP1 binding, and thus inhibits COP1-mediated degradation of transcription factors (e.g. CO and HY5). Promotes flowering time in continuous light (LL). Involved in shortening the circadian clock period, especially at 27 degrees Celsius, in blue light (BL). Required to maintain clock genes expression rhythm. Triggers nuclear accumulation of ROS in response to blue light illumination. Involved in blue light-dependent stomatal opening, transpiration and inhibition of stem and root growth, probably by regulating abscisic acid (ABA). Regulates the timing of flowering by promoting the expression of 'FLOWERING LOCUS T' (FT) in vascular bundles. Negatively regulated by 'FLOWERING LOCUS C' (FLC). General positive regulator of reversible low light-induced chromatin decompaction. Involved in triggering chromatin decondensation during floral transition. Together with phototropins, involved in phototropism regulation by various blue light fluence; blue light attenuates phototropism in high fluence rates (100 umol.m-2.s-1) but enhances phototropism in low fluence rates (&lt;1.0 umol.m-2.s-1). The effect of near-null magnetic field on flowering is altered by changes of blue light cycle and intensity in a CRY1/CRY2-dependent manner. Involved in the strigolactone signaling that regulates hypocotyl growth in response to blue light. In terms of biological role, confers resistance to turnip crinkle virus (TCV) by preventing COP1-mediated proteasome-mediated degradation of RPP8/HRT, thus promoting its stability in light. Exposure to darkness or blue-light induces degradation of CRY2, and in turn of RPP8/HRT, resulting in susceptibility to TCV. This chain is Cryptochrome-2, found in Arabidopsis thaliana (Mouse-ear cress).